The primary structure comprises 549 residues: CTP synthase (549 aa).

The tract at residues 1–272 is amidoligase domain; sequence MPPKSSTTKH…DAYVVRRMDL (272 aa). Position 19 (Ser-19) interacts with CTP. Residue Ser-19 participates in UTP binding. Residues 20 to 25 and Asp-77 each bind ATP; that span reads SLGKGL. Asp-77 and Glu-146 together coordinate Mg(2+). CTP contacts are provided by residues 153–155, 193–198, and Lys-229; these read DIE and KTKPTQ. Residues 193–198 and Lys-229 contribute to the UTP site; that span reads KTKPTQ. In terms of domain architecture, Glutamine amidotransferase type-1 spans 301–548; that stretch reads VGKYIDLPDA…VKAAVERKTS (248 aa). Gly-360 contacts L-glutamine. Cys-387 (nucleophile; for glutamine hydrolysis) is an active-site residue. L-glutamine-binding positions include 388-391, Glu-411, and Arg-473; that span reads LGLQ. Active-site residues include His-521 and Glu-523.

It belongs to the CTP synthase family. In terms of assembly, homotetramer.

The catalysed reaction is UTP + L-glutamine + ATP + H2O = CTP + L-glutamate + ADP + phosphate + 2 H(+). It carries out the reaction L-glutamine + H2O = L-glutamate + NH4(+). The enzyme catalyses UTP + NH4(+) + ATP = CTP + ADP + phosphate + 2 H(+). The protein operates within pyrimidine metabolism; CTP biosynthesis via de novo pathway; CTP from UDP: step 2/2. Allosterically activated by GTP, when glutamine is the substrate; GTP has no effect on the reaction when ammonia is the substrate. The allosteric effector GTP functions by stabilizing the protein conformation that binds the tetrahedral intermediate(s) formed during glutamine hydrolysis. Inhibited by the product CTP, via allosteric rather than competitive inhibition. Functionally, catalyzes the ATP-dependent amination of UTP to CTP with either L-glutamine or ammonia as the source of nitrogen. Regulates intracellular CTP levels through interactions with the four ribonucleotide triphosphates. The polypeptide is CTP synthase (Streptomyces coelicolor (strain ATCC BAA-471 / A3(2) / M145)).